The primary structure comprises 391 residues: Succinate--CoA ligase [ADP-forming] subunit beta (391 aa).

The 240-residue stretch at 9 to 248 (KDILRKFGVS…TGEEDPFEVE (240 aa)) folds into the ATP-grasp domain. ATP is bound by residues Lys-50, 57–59 (GRG), Glu-103, Met-106, and Glu-111. Mg(2+) contacts are provided by Asn-203 and Asp-217. Substrate-binding positions include Asn-268 and 325–327 (GIV).

It belongs to the succinate/malate CoA ligase beta subunit family. Heterotetramer of two alpha and two beta subunits. Requires Mg(2+) as cofactor.

It carries out the reaction succinate + ATP + CoA = succinyl-CoA + ADP + phosphate. It catalyses the reaction GTP + succinate + CoA = succinyl-CoA + GDP + phosphate. The protein operates within carbohydrate metabolism; tricarboxylic acid cycle; succinate from succinyl-CoA (ligase route): step 1/1. Succinyl-CoA synthetase functions in the citric acid cycle (TCA), coupling the hydrolysis of succinyl-CoA to the synthesis of either ATP or GTP and thus represents the only step of substrate-level phosphorylation in the TCA. The beta subunit provides nucleotide specificity of the enzyme and binds the substrate succinate, while the binding sites for coenzyme A and phosphate are found in the alpha subunit. The chain is Succinate--CoA ligase [ADP-forming] subunit beta from Chlorobium phaeobacteroides (strain BS1).